A 392-amino-acid chain; its full sequence is Probable glycerol-3-phosphate dehydrogenase 2 (392 aa).

NAD(+) is bound by residues 42-47 (GSGNWG), phenylalanine 130, lysine 153, and alanine 196. Lysine 153 contacts substrate. Lysine 248 serves as the catalytic Proton acceptor. NAD(+) is bound by residues arginine 312 and glutamine 341. Substrate is bound at residue 312-313 (RN).

Belongs to the NAD-dependent glycerol-3-phosphate dehydrogenase family. Homodimer.

It localises to the cytoplasm. It catalyses the reaction sn-glycerol 3-phosphate + NAD(+) = dihydroxyacetone phosphate + NADH + H(+). This Caenorhabditis elegans protein is Probable glycerol-3-phosphate dehydrogenase 2 (gpdh-2).